Consider the following 422-residue polypeptide: Dihydrolipoyllysine-residue succinyltransferase component of 2-oxoglutarate dehydrogenase complex (422 aa).

A Lipoyl-binding domain is found at 1–76 (MPEVKVPELA…EVGQAIAIIG (76 aa)). N6-lipoyllysine is present on Lys-42. The segment at 77 to 184 (EGSGNASKEN…APAKEEKKYN (108 aa)) is disordered. Composition is skewed to polar residues over residues 80 to 94 (GNAS…TPQQ) and 116 to 130 (NQAN…NATP). In terms of domain architecture, Peripheral subunit-binding (PSBD) spans 127 to 163 (NATPSARRYARENGVNLAEVSPKTNDVVRKEDIDKKQ). A compositionally biased stretch (basic and acidic residues) spans 152 to 163 (DVVRKEDIDKKQ). A compositionally biased stretch (low complexity) spans 164–176 (QAPASTQTTQQAP). Residues His-393 and Asp-397 contribute to the active site.

It belongs to the 2-oxoacid dehydrogenase family. In terms of assembly, forms a 24-polypeptide structural core with octahedral symmetry. Part of the 2-oxoglutarate dehydrogenase (OGDH) complex composed of E1 (2-oxoglutarate dehydrogenase), E2 (dihydrolipoamide succinyltransferase) and E3 (dihydrolipoamide dehydrogenase); the complex contains multiple copies of the three enzymatic components (E1, E2 and E3). It depends on (R)-lipoate as a cofactor.

It carries out the reaction N(6)-[(R)-dihydrolipoyl]-L-lysyl-[protein] + succinyl-CoA = N(6)-[(R)-S(8)-succinyldihydrolipoyl]-L-lysyl-[protein] + CoA. The protein operates within amino-acid degradation; L-lysine degradation via saccharopine pathway; glutaryl-CoA from L-lysine: step 6/6. Its function is as follows. E2 component of the 2-oxoglutarate dehydrogenase (OGDH) complex which catalyzes the second step in the conversion of 2-oxoglutarate to succinyl-CoA and CO(2). In Staphylococcus aureus (strain Mu50 / ATCC 700699), this protein is Dihydrolipoyllysine-residue succinyltransferase component of 2-oxoglutarate dehydrogenase complex (odhB).